Here is a 641-residue protein sequence, read N- to C-terminus: Mediator of RNA polymerase II transcription subunit 17 (641 aa).

Residues Arg-159–Arg-186 adopt a coiled-coil conformation.

It belongs to the Mediator complex subunit 17 family. In terms of assembly, component of the Mediator complex.

The protein resides in the nucleus. Its function is as follows. Component of the Mediator complex, a coactivator involved in the regulated transcription of nearly all RNA polymerase II-dependent genes. Mediator functions as a bridge to convey information from gene-specific regulatory proteins to the basal RNA polymerase II transcription machinery. Mediator is recruited to promoters by direct interactions with regulatory proteins and serves as a scaffold for the assembly of a functional preinitiation complex with RNA polymerase II and the general transcription factors. The protein is Mediator of RNA polymerase II transcription subunit 17 (srb4) of Aspergillus clavatus (strain ATCC 1007 / CBS 513.65 / DSM 816 / NCTC 3887 / NRRL 1 / QM 1276 / 107).